Here is a 75-residue protein sequence, read N- to C-terminus: Dermaseptin-SP4 (75 aa).

The signal sequence occupies residues 1–22 (MAFLKKSLFLVLFLGLVSLSMC). Positions 23 to 45 (EEEKRENEVEEEQEDDEQSELRR) are excised as a propeptide. P72 bears the Proline amide mark. A propeptide spanning residues 74-75 (EQ) is cleaved from the precursor.

Belongs to the frog skin active peptide (FSAP) family. Dermaseptin subfamily. In terms of tissue distribution, expressed by the skin glands.

Its subcellular location is the secreted. The protein resides in the target cell membrane. Antimicrobial peptide with activity against Gram-positive and Gram-negative bacteria and fungi. Has been tested against E.coli (MIC=47.25-128 uM), S.aureus (MIC=189-512 uM), K.pneumoniae (MIC=189 uM) and C.albicans (MIC&gt;189 uM). Probably acts by disturbing membrane functions with its alpha-helical amphipathic structure. May penetrate bacterial membranes, but stay at the mammalian membrane surface. Shows a weak hemolytic activity. This Agalychnis spurrelli (Gliding leaf frog) protein is Dermaseptin-SP4.